We begin with the raw amino-acid sequence, 759 residues long: MPLTARAGHTLHRLPLSHYWWLLLGRHSLRHVHSYLRLRKGLRLPLPWPEQECLHLHPKPYKFLLRYPCLTRQPHLLQGWPADSSLWFDPKPYHPSADSKLLPLGLITLSAFSMRVSEPTHCSGFHAADPSLSWLTGSSPWLVLLQAPGGSLFCHDVFQGRLYLLSHSVSLFLKTGLRQCEAIYRAPLWRVRPLPSLWTCRDPDTAFLPKLLARTARRGLAAFYALWRLHLGSRSELSHPVLEWERTELVLTDRRRGWPCTHLLSGSESQRVSSSDAGDTWNAATEKAAGGKEEAERGGRQQATDRLASPHLTRGRRDCGRSLQGEEPSAAEDFARCRPLLDELCGEGGWLPFAFLTASPHVCLILTEGGPVLALDLNDTSLWRIADDLELLLRLGSLLLLSGLRLPLRPPSGSGEAARKPGYEKEEGRGRATTASATAATSPRRPTRPRGVTEKGRVTTGDVPFSAHPESEEQTDGHHGRQESGHGDQRGGDGRGHRDDGARRHANDETEPQQRGEHEDGEQTDSGREEDAQESEVARRDEKGTEQGGSGRSCGRATQTYGGRGEHGAWSSIPLSVPRPDPRVWVPPPHLLFPSPLPSITPVEDEPSARPRCPPGPAEEPSKCSPCPPCPSPDAPQSAVPRLSALSVPSPSTARVRFSLSSLSSSSSSSSSSSPSYSPSPLSPPSPVSPSSPRSPFISPIRSPGLRAKPWVSSGHPVAFPPAPSSAPPFSKRVPSVPSSASPSAPCIGRSRPPSAQTA.

2 disordered regions span residues 269 to 328 (SQRV…GEEP) and 406 to 759 (LPLR…AQTA). Basic and acidic residues predominate over residues 289 to 299 (AGGKEEAERGG). Residues 406-415 (LPLRPPSGSG) are compositionally biased toward low complexity. Positions 417 to 430 (AARKPGYEKEEGRG) are enriched in basic and acidic residues. Over residues 431–444 (RATTASATAATSPR) the composition is skewed to low complexity. Composition is skewed to basic and acidic residues over residues 469–518 (PESE…RGEH) and 525–545 (DSGR…EKGT). The segment covering 585 to 599 (WVPPPHLLFPSPLPS) has biased composition (pro residues). The span at 659-680 (SLSSLSSSSSSSSSSSPSYSPS) shows a compositional bias: low complexity. Residues 681–690 (PLSPPSPVSP) show a composition bias toward pro residues. Composition is skewed to low complexity over residues 691–704 (SSPR…IRSP) and 728–746 (PPFS…PSAP).

This is an uncharacterized protein from Human herpesvirus 6B (strain Z29) (HHV-6 variant B).